The primary structure comprises 147 residues: Large ribosomal subunit protein uL23A (147 aa).

The span at 1-10 (MAPSAPAKTA) shows a compositional bias: low complexity. The segment at 1–29 (MAPSAPAKTAKALDAKKKVVKGKRTTHRR) is disordered. The segment covering 18 to 29 (KVVKGKRTTHRR) has biased composition (basic residues).

Belongs to the universal ribosomal protein uL23 family.

Its function is as follows. This protein binds to a specific region on the 26S rRNA. This is Large ribosomal subunit protein uL23A from Caenorhabditis elegans.